The chain runs to 301 residues: Putative carboxypeptidase slr1534 (301 aa).

The active-site Nucleophile is the Ser-116. Catalysis depends on charge relay system residues Glu-206 and His-276.

This sequence belongs to the peptidase S66 family.

The protein is Putative carboxypeptidase slr1534 of Synechocystis sp. (strain ATCC 27184 / PCC 6803 / Kazusa).